The sequence spans 417 residues: MKFVLKSISKNSGRLGQLRIKQSKELQTPLLLQTTKGGSIPYLSAEVFDLVSQEHQQVLQLTLSTMDQMSESLAQWNRSLSDYVGYPGYNTLLLLRDPCETTPTGGNDRDVVPLFTRHGKESLTAARYMDMVANFAPDVYQGLCDADTNPESTKKRVQKSVDRTERFMELCYEQHSKLARLKDSTLLAPIVGGYSTFARTQSIKHARQQPAGSYGGYILEGFHTNGLAATELKAAQLLPIVEHCVQQLEEEQPRLMPGAYTPLLLLELIRLGVDVFDSSYAYCAATNYKALTFSYVRDKAEHAAFLDVTDEAIKEDFKPLLEDCSCLSCQKHTRAYIHHLYKTHELLGTILLMIHNLHHYMCFFEAIRASMAADQLPELIEHVRMQNTTAEVNYRIEPNNKVVGKAAMGKGFIAAAV.

Residues cysteine 324, cysteine 326, cysteine 329, and histidine 355 each coordinate Zn(2+).

Belongs to the queuine tRNA-ribosyltransferase family. QTRT2 subfamily. In terms of assembly, heterodimer of a catalytic subunit and an accessory subunit. The cofactor is Zn(2+).

It localises to the cytoplasm. Its function is as follows. Non-catalytic subunit of the queuine tRNA-ribosyltransferase (TGT) that catalyzes the base-exchange of a guanine (G) residue with queuine (Q) at position 34 (anticodon wobble position) in tRNAs with GU(N) anticodons (tRNA-Asp, -Asn, -His and -Tyr), resulting in the hypermodified nucleoside queuosine (7-(((4,5-cis-dihydroxy-2-cyclopenten-1-yl)amino)methyl)-7-deazaguanosine). The sequence is that of Queuine tRNA-ribosyltransferase accessory subunit 2 from Drosophila virilis (Fruit fly).